A 98-amino-acid chain; its full sequence is NADH-ubiquinone oxidoreductase chain 4L (98 aa).

3 consecutive transmembrane segments (helical) span residues 1-21 (MMSI…GVLI), 28-48 (STLL…ALLI), and 59-79 (APLI…ALLV).

The protein belongs to the complex I subunit 4L family. As to quaternary structure, core subunit of respiratory chain NADH dehydrogenase (Complex I) which is composed of 45 different subunits.

Its subcellular location is the mitochondrion inner membrane. It carries out the reaction a ubiquinone + NADH + 5 H(+)(in) = a ubiquinol + NAD(+) + 4 H(+)(out). Its function is as follows. Core subunit of the mitochondrial membrane respiratory chain NADH dehydrogenase (Complex I) which catalyzes electron transfer from NADH through the respiratory chain, using ubiquinone as an electron acceptor. Part of the enzyme membrane arm which is embedded in the lipid bilayer and involved in proton translocation. The protein is NADH-ubiquinone oxidoreductase chain 4L (MT-ND4L) of Lagorchestes hirsutus (Rufous hare-wallaby).